Reading from the N-terminus, the 523-residue chain is 2-isopropylmalate synthase (523 aa).

The 263-residue stretch at 5–267 folds into the Pyruvate carboxyltransferase domain; sequence VIIFDTTLRD…HTNINHHEIW (263 aa). The Mn(2+) site is built by Asp14, His202, His204, and Asn238. The segment at 392–523 is regulatory domain; sequence RLDYFSVQSG…QNKENNKETV (132 aa).

The protein belongs to the alpha-IPM synthase/homocitrate synthase family. LeuA type 1 subfamily. As to quaternary structure, homodimer. Mn(2+) serves as cofactor.

It localises to the cytoplasm. It catalyses the reaction 3-methyl-2-oxobutanoate + acetyl-CoA + H2O = (2S)-2-isopropylmalate + CoA + H(+). It functions in the pathway amino-acid biosynthesis; L-leucine biosynthesis; L-leucine from 3-methyl-2-oxobutanoate: step 1/4. Catalyzes the condensation of the acetyl group of acetyl-CoA with 3-methyl-2-oxobutanoate (2-ketoisovalerate) to form 3-carboxy-3-hydroxy-4-methylpentanoate (2-isopropylmalate). In Salmonella choleraesuis (strain SC-B67), this protein is 2-isopropylmalate synthase.